The sequence spans 470 residues: Glutamate--tRNA ligase (470 aa).

The 'HIGH' region motif lies at 12-22 (PSPTGIFHVGG). Residues Cys-103, Cys-105, Cys-125, and Asp-127 each contribute to the Zn(2+) site. The short motif at 236 to 240 (KLSKR) is the 'KMSKS' region element. Lys-239 lines the ATP pocket.

The protein belongs to the class-I aminoacyl-tRNA synthetase family. Glutamate--tRNA ligase type 1 subfamily. As to quaternary structure, monomer. Zn(2+) is required as a cofactor.

The protein resides in the cytoplasm. The enzyme catalyses tRNA(Glu) + L-glutamate + ATP = L-glutamyl-tRNA(Glu) + AMP + diphosphate. Its function is as follows. Catalyzes the attachment of glutamate to tRNA(Glu) in a two-step reaction: glutamate is first activated by ATP to form Glu-AMP and then transferred to the acceptor end of tRNA(Glu). The chain is Glutamate--tRNA ligase from Frankia casuarinae (strain DSM 45818 / CECT 9043 / HFP020203 / CcI3).